Consider the following 652-residue polypeptide: Acetyl-coenzyme A synthetase (652 aa).

CoA is bound by residues 189–192 (RGGK) and Thr311. Residues 387–389 (GEP), 411–416 (DTWWQT), Asp500, and Arg515 contribute to the ATP site. A CoA-binding site is contributed by Ser523. Residue Arg526 coordinates ATP. Positions 537, 539, and 542 each coordinate Mg(2+). Arg584 serves as a coordination point for CoA. Lys609 is modified (N6-acetyllysine).

Belongs to the ATP-dependent AMP-binding enzyme family. Requires Mg(2+) as cofactor. In terms of processing, acetylated. Deacetylation by the SIR2-homolog deacetylase activates the enzyme.

The enzyme catalyses acetate + ATP + CoA = acetyl-CoA + AMP + diphosphate. Catalyzes the conversion of acetate into acetyl-CoA (AcCoA), an essential intermediate at the junction of anabolic and catabolic pathways. AcsA undergoes a two-step reaction. In the first half reaction, AcsA combines acetate with ATP to form acetyl-adenylate (AcAMP) intermediate. In the second half reaction, it can then transfer the acetyl group from AcAMP to the sulfhydryl group of CoA, forming the product AcCoA. This chain is Acetyl-coenzyme A synthetase, found in Bartonella henselae (strain ATCC 49882 / DSM 28221 / CCUG 30454 / Houston 1) (Rochalimaea henselae).